The chain runs to 361 residues: Methylthioribose-1-phosphate isomerase (361 aa).

D245 serves as the catalytic Proton donor.

It belongs to the eIF-2B alpha/beta/delta subunits family. MtnA subfamily.

It is found in the cytoplasm. Its subcellular location is the nucleus. The enzyme catalyses 5-(methylsulfanyl)-alpha-D-ribose 1-phosphate = 5-(methylsulfanyl)-D-ribulose 1-phosphate. It functions in the pathway amino-acid biosynthesis; L-methionine biosynthesis via salvage pathway; L-methionine from S-methyl-5-thio-alpha-D-ribose 1-phosphate: step 1/6. Functionally, catalyzes the interconversion of methylthioribose-1-phosphate (MTR-1-P) into methylthioribulose-1-phosphate (MTRu-1-P). This is Methylthioribose-1-phosphate isomerase from Monosiga brevicollis (Choanoflagellate).